Consider the following 441-residue polypeptide: Fibroleukin (441 aa).

Positions 1–15 are cleaved as a signal peptide; that stretch reads MKLANWCWLSSTVLA. The N-linked (GlcNAc...) asparagine glycan is linked to Asn-25. Residues 73-167 adopt a coiled-coil conformation; it reads SRIEEVFKEV…LEKLNLVNMN (95 aa). The segment at 102–128 is disordered; the sequence is QADDSRDPGRNGLLLPGTGAPGETGDN. N-linked (GlcNAc...) asparagine glycans are attached at residues Asn-179, Asn-237, Asn-265, and Asn-338. The region spanning 206 to 438 is the Fibrinogen C-terminal domain; it reads VQQHLIYKDC…EVKMMIRPKH (233 aa).

Homotetramer; disulfide-linked.

The protein resides in the secreted. In terms of biological role, may play a role in physiologic lymphocyte functions at mucosal sites. The protein is Fibroleukin (FGL2) of Bos taurus (Bovine).